Reading from the N-terminus, the 225-residue chain is Uridylate kinase (225 aa).

G9–S10 is a binding site for ATP. G46 is a binding site for UMP. Residues G47 and R51 each coordinate ATP. Residues D67 and T115–T121 each bind UMP. The ATP site is built by T141, N142, Y147, and D150.

This sequence belongs to the UMP kinase family. Homohexamer.

The protein localises to the cytoplasm. The enzyme catalyses UMP + ATP = UDP + ADP. It functions in the pathway pyrimidine metabolism; CTP biosynthesis via de novo pathway; UDP from UMP (UMPK route): step 1/1. Its activity is regulated as follows. Inhibited by UTP. Functionally, catalyzes the reversible phosphorylation of UMP to UDP. The sequence is that of Uridylate kinase from Methanococcus vannielii (strain ATCC 35089 / DSM 1224 / JCM 13029 / OCM 148 / SB).